The following is a 407-amino-acid chain: [Pyruvate dehydrogenase (acetyl-transferring)] kinase isozyme 2, mitochondrial (407 aa).

Positions L135–S364 constitute a Histidine kinase domain. A phosphotyrosine mark is found at Y215 and Y216. Residues E251–R258, D290, S309–T310, and G325–L330 contribute to the ATP site. K376 is modified (N6-succinyllysine).

The protein belongs to the PDK/BCKDK protein kinase family. As to quaternary structure, homodimer, and heterodimer with PDK1. Interacts with the pyruvate dehydrogenase complex subunit DLAT, and is part of the multimeric pyruvate dehydrogenase complex that contains multiple copies of pyruvate dehydrogenase (E1), dihydrolipoamide acetyltransferase (DLAT, E2) and lipoamide dehydrogenase (DLD, E3). In terms of tissue distribution, detected in heart (at protein level).

Its subcellular location is the mitochondrion matrix. It carries out the reaction L-seryl-[pyruvate dehydrogenase E1 alpha subunit] + ATP = O-phospho-L-seryl-[pyruvate dehydrogenase E1 alpha subunit] + ADP + H(+). In terms of biological role, kinase that plays a key role in the regulation of glucose and fatty acid metabolism and homeostasis via phosphorylation of the pyruvate dehydrogenase subunits PDHA1 and PDHA2. This inhibits pyruvate dehydrogenase activity, and thereby regulates metabolite flux through the tricarboxylic acid cycle, down-regulates aerobic respiration and inhibits the formation of acetyl-coenzyme A from pyruvate. Inhibition of pyruvate dehydrogenase decreases glucose utilization and increases fat metabolism. Mediates cellular responses to insulin. Plays an important role in maintaining normal blood glucose levels and in metabolic adaptation to nutrient availability. Via its regulation of pyruvate dehydrogenase activity, plays an important role in maintaining normal blood pH and in preventing the accumulation of ketone bodies under starvation. Plays a role in the regulation of cell proliferation and in resistance to apoptosis under oxidative stress. Plays a role in p53/TP53-mediated apoptosis. The polypeptide is [Pyruvate dehydrogenase (acetyl-transferring)] kinase isozyme 2, mitochondrial (Pdk2) (Mus musculus (Mouse)).